Here is a 1036-residue protein sequence, read N- to C-terminus: Isoleucine--tRNA ligase (1036 aa).

Residues P48 to H58 carry the 'HIGH' region motif. The 'KMSKS' region motif lies at K590–S594. K593 serves as a coordination point for ATP.

It belongs to the class-I aminoacyl-tRNA synthetase family. IleS type 2 subfamily. As to quaternary structure, monomer. It depends on Zn(2+) as a cofactor.

The protein resides in the cytoplasm. It carries out the reaction tRNA(Ile) + L-isoleucine + ATP = L-isoleucyl-tRNA(Ile) + AMP + diphosphate. Its function is as follows. Catalyzes the attachment of isoleucine to tRNA(Ile). As IleRS can inadvertently accommodate and process structurally similar amino acids such as valine, to avoid such errors it has two additional distinct tRNA(Ile)-dependent editing activities. One activity is designated as 'pretransfer' editing and involves the hydrolysis of activated Val-AMP. The other activity is designated 'posttransfer' editing and involves deacylation of mischarged Val-tRNA(Ile). This is Isoleucine--tRNA ligase from Clostridium tetani (strain Massachusetts / E88).